A 265-amino-acid polypeptide reads, in one-letter code: NAD kinase 2 (265 aa).

Asn51 acts as the Proton acceptor in catalysis. NAD(+) is bound by residues 122 to 123, Arg149, Asp151, 162 to 167, Ala186, and Asn226; these read NE and TAYNKS.

It belongs to the NAD kinase family. The cofactor is a divalent metal cation.

The protein resides in the cytoplasm. The enzyme catalyses NAD(+) + ATP = ADP + NADP(+) + H(+). Involved in the regulation of the intracellular balance of NAD and NADP, and is a key enzyme in the biosynthesis of NADP. Catalyzes specifically the phosphorylation on 2'-hydroxyl of the adenosine moiety of NAD to yield NADP. The protein is NAD kinase 2 of Halalkalibacterium halodurans (strain ATCC BAA-125 / DSM 18197 / FERM 7344 / JCM 9153 / C-125) (Bacillus halodurans).